Here is a 446-residue protein sequence, read N- to C-terminus: Na(+)-translocating NADH-quinone reductase subunit A (446 aa).

The protein belongs to the NqrA family. As to quaternary structure, composed of six subunits; NqrA, NqrB, NqrC, NqrD, NqrE and NqrF.

The catalysed reaction is a ubiquinone + n Na(+)(in) + NADH + H(+) = a ubiquinol + n Na(+)(out) + NAD(+). NQR complex catalyzes the reduction of ubiquinone-1 to ubiquinol by two successive reactions, coupled with the transport of Na(+) ions from the cytoplasm to the periplasm. NqrA to NqrE are probably involved in the second step, the conversion of ubisemiquinone to ubiquinol. The chain is Na(+)-translocating NADH-quinone reductase subunit A from Vibrio anguillarum (Listonella anguillarum).